A 328-amino-acid chain; its full sequence is Putative UDP-N-acetylglucosamine--dolichyl-phosphate N-acetylglucosaminephosphotransferase (328 aa).

A run of 9 helical transmembrane segments spans residues 1–21 (MLVSLLGILLSVIVGFVVTLI), 48–68 (VPVLGGIGIVAGFVAGSFTFL), 78–98 (IENVVVSILLSSLIIGFLGLL), 107–127 (ATRAFLPIFASIPLILYSVGH), 129–149 (IISIPFLGKVNFGILFYIIIL), 166–186 (LNGLGAGMGLIMALALAYIGL), 192–212 (SFYAGIVSIILASVLFGFLIF), 228–248 (FIGSVIGSIGISGYMYTALFF), and 301–321 (YHIVLIIWGIEILFAILAVVF).

It belongs to the glycosyltransferase 4 family.

The protein resides in the cell membrane. The catalysed reaction is a di-trans,poly-cis-dolichyl phosphate + UDP-N-acetyl-alpha-D-glucosamine = an N-acetyl-alpha-D-glucosaminyl-diphospho-di-trans,poly-cis-dolichol + UMP. With respect to regulation, inhibited by tunicamycin. This chain is Putative UDP-N-acetylglucosamine--dolichyl-phosphate N-acetylglucosaminephosphotransferase (gnpTA), found in Sulfolobus acidocaldarius (strain ATCC 33909 / DSM 639 / JCM 8929 / NBRC 15157 / NCIMB 11770).